The following is a 269-amino-acid chain: Shikimate dehydrogenase (NADP(+)) (269 aa).

Shikimate contacts are provided by residues 17–19 (SKS) and threonine 64. The active-site Proton acceptor is the lysine 68. Glutamate 80 lines the NADP(+) pocket. Residues asparagine 89 and aspartate 105 each contribute to the shikimate site. Residues 130 to 134 (GAGGA), 154 to 159 (NRTRAK), and methionine 213 each bind NADP(+). Tyrosine 215 contributes to the shikimate binding site. NADP(+) is bound at residue glycine 237.

It belongs to the shikimate dehydrogenase family. As to quaternary structure, homodimer.

It catalyses the reaction shikimate + NADP(+) = 3-dehydroshikimate + NADPH + H(+). It functions in the pathway metabolic intermediate biosynthesis; chorismate biosynthesis; chorismate from D-erythrose 4-phosphate and phosphoenolpyruvate: step 4/7. Involved in the biosynthesis of the chorismate, which leads to the biosynthesis of aromatic amino acids. Catalyzes the reversible NADPH linked reduction of 3-dehydroshikimate (DHSA) to yield shikimate (SA). This Neisseria meningitidis serogroup B (strain ATCC BAA-335 / MC58) protein is Shikimate dehydrogenase (NADP(+)).